A 384-amino-acid chain; its full sequence is 23S rRNA (uracil(747)-C(5))-methyltransferase RlmC (384 aa).

C7, C15, C18, and C94 together coordinate [4Fe-4S] cluster. The S-adenosyl-L-methionine site is built by Q219, F248, E269, and N316. Catalysis depends on C343, which acts as the Nucleophile.

Belongs to the class I-like SAM-binding methyltransferase superfamily. RNA M5U methyltransferase family. RlmC subfamily.

The catalysed reaction is uridine(747) in 23S rRNA + S-adenosyl-L-methionine = 5-methyluridine(747) in 23S rRNA + S-adenosyl-L-homocysteine + H(+). Catalyzes the formation of 5-methyl-uridine at position 747 (m5U747) in 23S rRNA. The protein is 23S rRNA (uracil(747)-C(5))-methyltransferase RlmC of Shewanella sp. (strain MR-7).